A 329-amino-acid polypeptide reads, in one-letter code: Deoxynucleotidyltransferase terminal-interacting protein 1 (329 aa).

Disordered regions lie at residues 1 to 22 (MGAT…GGLE) and 147 to 178 (KRGR…ILSS). Residues 56–147 (MTTSFTDPAI…RLTHELPGIK (92 aa)) are important for dimerization. A compositionally biased stretch (basic and acidic residues) spans 147–158 (KRGRQAEEECAH). The segment at residues 159–173 (RGSPLPKKRKGRPPG) is a DNA-binding region (a.T hook). Phosphoserine is present on serine 161. A Nuclear localization signal motif is present at residues 164–170 (PKKRKGR). The tract at residues 197–316 (REGPKWDPAR…MRKYMETLRT (120 aa)) is important for DNA and nucleosome binding. Residues 216-237 (GSRANKALGMGGTRGRIYIKHP) constitute a DNA-binding region (H-T-H motif).

Monomer and homodimer. A minor proportion may form homotrimers. Interacts with ZNF541. Interacts with the terminal deoxynucleotidyltransferase DNTT. Interacts with TRERF1. Identified in a histone deacetylase complex that contains DNTTIP1, HDAC1 and MIDEAS; this complex assembles into a tetramer that contains four copies of each protein chain. Component of a histone deacetylase complex containing DNTTIP1, ZNF541, HDAC1 and HDAC2. Identified in a complex with KCTD19, HDAC1, HDAC2 and ZNF541.

It localises to the nucleus. Functionally, increases DNTT terminal deoxynucleotidyltransferase activity (in vitro). Also acts as a transcriptional regulator, binding to the consensus sequence 5'-GNTGCATG-3' following an AT-tract. Associates with RAB20 promoter and positively regulates its transcription. Binds DNA and nucleosomes; may recruit HDAC1 complexes to nucleosomes or naked DNA. In Pongo abelii (Sumatran orangutan), this protein is Deoxynucleotidyltransferase terminal-interacting protein 1 (DNTTIP1).